Here is a 437-residue protein sequence, read N- to C-terminus: 3-phosphoshikimate 1-carboxyvinyltransferase (437 aa).

Residues Lys-26, Ser-27, and Arg-31 each coordinate 3-phosphoshikimate. Phosphoenolpyruvate is bound at residue Lys-26. Residues Gly-99 and Arg-127 each contribute to the phosphoenolpyruvate site. Ser-172, Gln-174, Asp-320, and Lys-347 together coordinate 3-phosphoshikimate. A phosphoenolpyruvate-binding site is contributed by Gln-174. Catalysis depends on Asp-320, which acts as the Proton acceptor. Residues Arg-351 and Arg-392 each coordinate phosphoenolpyruvate.

This sequence belongs to the EPSP synthase family. As to quaternary structure, monomer.

The protein resides in the cytoplasm. The catalysed reaction is 3-phosphoshikimate + phosphoenolpyruvate = 5-O-(1-carboxyvinyl)-3-phosphoshikimate + phosphate. Its pathway is metabolic intermediate biosynthesis; chorismate biosynthesis; chorismate from D-erythrose 4-phosphate and phosphoenolpyruvate: step 6/7. Catalyzes the transfer of the enolpyruvyl moiety of phosphoenolpyruvate (PEP) to the 5-hydroxyl of shikimate-3-phosphate (S3P) to produce enolpyruvyl shikimate-3-phosphate and inorganic phosphate. This chain is 3-phosphoshikimate 1-carboxyvinyltransferase, found in Methylococcus capsulatus (strain ATCC 33009 / NCIMB 11132 / Bath).